Reading from the N-terminus, the 118-residue chain is Vitelline membrane protein Vm32E (118 aa).

The N-terminal stretch at 1 to 17 is a signal peptide; it reads MKIVALTLVAFVALAGA. Residues 36 to 75 form the VM domain; sequence GYPAPPCPTNYLFSCQPNLAPAPCAQEAQAPAYGSAGAYT.

It belongs to the vitelline membrane family.

It localises to the secreted. Its function is as follows. Major early eggshell protein. The protein is Vitelline membrane protein Vm32E of Drosophila mauritiana (Fruit fly).